The primary structure comprises 294 residues: Ribosomal RNA small subunit methyltransferase A (294 aa).

Residues Asn-31, Leu-33, Gly-58, Glu-79, Asp-104, and Asn-129 each coordinate S-adenosyl-L-methionine.

It belongs to the class I-like SAM-binding methyltransferase superfamily. rRNA adenine N(6)-methyltransferase family. RsmA subfamily.

Its subcellular location is the cytoplasm. It carries out the reaction adenosine(1518)/adenosine(1519) in 16S rRNA + 4 S-adenosyl-L-methionine = N(6)-dimethyladenosine(1518)/N(6)-dimethyladenosine(1519) in 16S rRNA + 4 S-adenosyl-L-homocysteine + 4 H(+). Functionally, specifically dimethylates two adjacent adenosines (A1518 and A1519) in the loop of a conserved hairpin near the 3'-end of 16S rRNA in the 30S particle. May play a critical role in biogenesis of 30S subunits. The polypeptide is Ribosomal RNA small subunit methyltransferase A (Oceanobacillus iheyensis (strain DSM 14371 / CIP 107618 / JCM 11309 / KCTC 3954 / HTE831)).